Consider the following 300-residue polypeptide: Quinolinate synthase (300 aa).

Iminosuccinate is bound by residues H21 and S38. C83 contributes to the [4Fe-4S] cluster binding site. Iminosuccinate-binding positions include 109-111 (YVN) and S126. C170 contacts [4Fe-4S] cluster. Iminosuccinate contacts are provided by residues 196 to 198 (HPE) and T213. C256 is a binding site for [4Fe-4S] cluster.

The protein belongs to the quinolinate synthase family. Type 2 subfamily. Monomer. Homodimer. [4Fe-4S] cluster serves as cofactor.

It is found in the cytoplasm. It carries out the reaction iminosuccinate + dihydroxyacetone phosphate = quinolinate + phosphate + 2 H2O + H(+). It functions in the pathway cofactor biosynthesis; NAD(+) biosynthesis; quinolinate from iminoaspartate: step 1/1. Catalyzes the condensation of iminoaspartate with dihydroxyacetone phosphate to form quinolinate. The polypeptide is Quinolinate synthase (Pyrococcus horikoshii (strain ATCC 700860 / DSM 12428 / JCM 9974 / NBRC 100139 / OT-3)).